Reading from the N-terminus, the 378-residue chain is Succinyl-diaminopimelate desuccinylase (378 aa).

Position 68 (histidine 68) interacts with Zn(2+). Aspartate 70 is an active-site residue. Aspartate 102 provides a ligand contact to Zn(2+). Glutamate 136 (proton acceptor) is an active-site residue. Zn(2+) contacts are provided by glutamate 137, glutamate 165, and histidine 351.

Belongs to the peptidase M20A family. DapE subfamily. In terms of assembly, homodimer. The cofactor is Zn(2+). Requires Co(2+) as cofactor.

It catalyses the reaction N-succinyl-(2S,6S)-2,6-diaminopimelate + H2O = (2S,6S)-2,6-diaminopimelate + succinate. The protein operates within amino-acid biosynthesis; L-lysine biosynthesis via DAP pathway; LL-2,6-diaminopimelate from (S)-tetrahydrodipicolinate (succinylase route): step 3/3. Catalyzes the hydrolysis of N-succinyl-L,L-diaminopimelic acid (SDAP), forming succinate and LL-2,6-diaminopimelate (DAP), an intermediate involved in the bacterial biosynthesis of lysine and meso-diaminopimelic acid, an essential component of bacterial cell walls. This Pseudomonas syringae pv. syringae protein is Succinyl-diaminopimelate desuccinylase.